A 215-amino-acid chain; its full sequence is Adenylate kinase (215 aa).

10–15 (GTGKGT) provides a ligand contact to ATP. The segment at 30–59 (STGHILRKISTKKTLFGEKIKNIINSGKLV) is NMP. AMP is bound by residues T31, R36, 57–59 (KLV), 85–88 (GFPR), and Q92. Residues 122–157 (TRTINPITGTIYNNVIQKNSELKNLKINTLKSRLDD) form an LID region. Residues R123 and 132–133 (IY) each bind ATP. Positions 154 and 165 each coordinate AMP. Residue N198 participates in ATP binding.

It belongs to the adenylate kinase family. As to quaternary structure, monomer.

Its subcellular location is the cytoplasm. It catalyses the reaction AMP + ATP = 2 ADP. The protein operates within purine metabolism; AMP biosynthesis via salvage pathway; AMP from ADP: step 1/1. Functionally, catalyzes the reversible transfer of the terminal phosphate group between ATP and AMP. Plays an important role in cellular energy homeostasis and in adenine nucleotide metabolism. The protein is Adenylate kinase of Buchnera aphidicola subsp. Baizongia pistaciae (strain Bp).